The primary structure comprises 239 residues: tRNA (guanine-N(1)-)-methyltransferase (239 aa).

S-adenosyl-L-methionine-binding positions include Gly-112 and 131–136; that span reads LGDFIL.

This sequence belongs to the RNA methyltransferase TrmD family. Homodimer.

It is found in the cytoplasm. The enzyme catalyses guanosine(37) in tRNA + S-adenosyl-L-methionine = N(1)-methylguanosine(37) in tRNA + S-adenosyl-L-homocysteine + H(+). Specifically methylates guanosine-37 in various tRNAs. This is tRNA (guanine-N(1)-)-methyltransferase from Clostridium tetani (strain Massachusetts / E88).